The primary structure comprises 524 residues: RNA-binding protein 39 (524 aa).

The segment at 1–146 (MADDIDIEAM…PVREPIDNLT (146 aa)) is disordered. Ala2 is modified (N-acetylalanine). The span at 14 to 32 (PYKKDENKLSSANGHEERS) shows a compositional bias: basic and acidic residues. Basic residues-rich tracts occupy residues 33–56 (KKRK…KERK) and 64–95 (KKSK…RGRY). Tyr95 is subject to Phosphotyrosine. Phosphoserine is present on residues Ser97 and Ser100. Lys111 participates in a covalent cross-link: Glycyl lysine isopeptide (Lys-Gly) (interchain with G-Cter in SUMO2). At Ser117 the chain carries Phosphoserine. A Glycyl lysine isopeptide (Lys-Gly) (interchain with G-Cter in SUMO2) cross-link involves residue Lys119. The segment covering 119 to 130 (KLSRRRSRSKSP) has biased composition (basic residues). Residues Ser121 and Ser136 each carry the phosphoserine modification. Over residues 131–146 (FRKDKSPVREPIDNLT) the composition is skewed to basic and acidic residues. Thr146 carries the post-translational modification Phosphothreonine. The RRM 1 domain maps to 153–230 (RTVFCMQLAA…VPIIVQASQA (78 aa)). A Glycyl lysine isopeptide (Lys-Gly) (interchain with G-Cter in SUMO2) cross-link involves residue Lys244. The RRM 2 domain occupies 250 to 328 (MRLYVGSLHF…RPMKVGHVTE (79 aa)). The tract at residues 291 to 355 (KGYGFITFSD…RTGIDLGTTG (65 aa)) is activating domain. The tract at residues 291 to 400 (KGYGFITFSD…ADLQTRLSQQ (110 aa)) is interaction with JUN. Phosphoserine occurs at positions 334, 337, and 341. Residues 355-400 (GRLQLMARLAEGTGLQIPPAAQQALQMSGSLAFGAVADLQTRLSQQ) form an interaction with ESR1 and ESR2 region. Residues 400–524 (QTEASALAAA…ATQLLVPSRR (125 aa)) are interaction with NCOA6. The region spanning 439 to 502 (EIKDDVIEEC…KMITAAYVPL (64 aa)) is the RRM 3 domain.

This sequence belongs to the splicing factor SR family. As to quaternary structure, interacts with NCOA6 and JUN. Interacts with ESR1 and ESR2, in the presence of estradiol (E2). Interacts with RSRC1 (via Arg/Ser-rich domain). Interacts with SF3B1. Interacts with ZNF106 (via N-terminus).

The protein localises to the nucleus speckle. RNA-binding protein that acts as a pre-mRNA splicing factor. Acts by promoting exon inclusion via regulation of exon cassette splicing. Also acts as a transcriptional coactivator for steroid nuclear receptors ESR1/ER-alpha and ESR2/ER-beta, and JUN/AP-1, independently of the pre-mRNA splicing factor activity. This Pongo abelii (Sumatran orangutan) protein is RNA-binding protein 39 (RBM39).